Reading from the N-terminus, the 326-residue chain is Delta-aminolevulinic acid dehydratase (326 aa).

Residues Cys125, Cys127, and Cys135 each contribute to the Zn(2+) site. Lys200 serves as the catalytic Schiff-base intermediate with substrate. 2 residues coordinate 5-aminolevulinate: Arg210 and Arg222. Residue Glu238 participates in Mg(2+) binding. Lys253 functions as the Schiff-base intermediate with substrate in the catalytic mechanism. A 5-aminolevulinate-binding site is contributed by Ser279.

This sequence belongs to the ALAD family. Homooctamer. It depends on Zn(2+) as a cofactor.

The enzyme catalyses 2 5-aminolevulinate = porphobilinogen + 2 H2O + H(+). It functions in the pathway porphyrin-containing compound metabolism; protoporphyrin-IX biosynthesis; coproporphyrinogen-III from 5-aminolevulinate: step 1/4. Functionally, catalyzes an early step in the biosynthesis of tetrapyrroles. Binds two molecules of 5-aminolevulinate per subunit, each at a distinct site, and catalyzes their condensation to form porphobilinogen. The protein is Delta-aminolevulinic acid dehydratase (hemB) of Methanothermobacter thermautotrophicus (strain ATCC 29096 / DSM 1053 / JCM 10044 / NBRC 100330 / Delta H) (Methanobacterium thermoautotrophicum).